Consider the following 225-residue polypeptide: UPF0173 metal-dependent hydrolase Pcal_1074 (225 aa).

It belongs to the UPF0173 family.

This Pyrobaculum calidifontis (strain DSM 21063 / JCM 11548 / VA1) protein is UPF0173 metal-dependent hydrolase Pcal_1074.